Here is a 103-residue protein sequence, read N- to C-terminus: Large ribosomal subunit protein bL21 (103 aa).

This sequence belongs to the bacterial ribosomal protein bL21 family. Part of the 50S ribosomal subunit. Contacts protein L20.

Functionally, this protein binds to 23S rRNA in the presence of protein L20. The chain is Large ribosomal subunit protein bL21 from Pectobacterium atrosepticum (strain SCRI 1043 / ATCC BAA-672) (Erwinia carotovora subsp. atroseptica).